A 589-amino-acid chain; its full sequence is Aspartate--tRNA ligase (589 aa).

Glu175 contacts L-aspartate. An aspartate region spans residues 199–202 (QIFK). Arg221 is an L-aspartate binding site. ATP contacts are provided by residues 221–223 (RDE) and Gln230. His449 serves as a coordination point for L-aspartate. Glu483 is a binding site for ATP. Arg490 is a binding site for L-aspartate. 535–538 (GLDR) contributes to the ATP binding site.

The protein belongs to the class-II aminoacyl-tRNA synthetase family. Type 1 subfamily. In terms of assembly, homodimer.

It localises to the cytoplasm. The enzyme catalyses tRNA(Asp) + L-aspartate + ATP = L-aspartyl-tRNA(Asp) + AMP + diphosphate. Its function is as follows. Catalyzes the attachment of L-aspartate to tRNA(Asp) in a two-step reaction: L-aspartate is first activated by ATP to form Asp-AMP and then transferred to the acceptor end of tRNA(Asp). This Shouchella clausii (strain KSM-K16) (Alkalihalobacillus clausii) protein is Aspartate--tRNA ligase.